Consider the following 93-residue polypeptide: MSLQPDTLLELSPLLRMQWEEAQQRYVILYPEGMIELNETAAAILELCDGQHNLTSIVDKLERKYDASGIEPDVREMLESALNNGWIREIIAY.

This sequence belongs to the PqqD family. In terms of assembly, monomer. Interacts with PqqE.

It functions in the pathway cofactor biosynthesis; pyrroloquinoline quinone biosynthesis. In terms of biological role, functions as a PqqA binding protein and presents PqqA to PqqE, in the pyrroloquinoline quinone (PQQ) biosynthetic pathway. The protein is PqqA binding protein of Methylococcus capsulatus (strain ATCC 33009 / NCIMB 11132 / Bath).